The chain runs to 298 residues: Protease HtpX homolog (298 aa).

2 consecutive transmembrane segments (helical) span residues 15-35 (LIMV…GYLF) and 39-59 (PWMG…IMWQ). Position 143 (His143) interacts with Zn(2+). Glu144 is a catalytic residue. His147 contacts Zn(2+). Transmembrane regions (helical) follow at residues 153–173 (ILLS…SGMA) and 197–217 (MIFK…SASL). Residue Glu227 coordinates Zn(2+).

Belongs to the peptidase M48B family. It depends on Zn(2+) as a cofactor.

It is found in the cell membrane. This is Protease HtpX homolog from Lactobacillus helveticus (strain DPC 4571).